Reading from the N-terminus, the 83-residue chain is Cytochrome b559 subunit alpha (83 aa).

The helical transmembrane segment at valine 21–tryptophan 35 threads the bilayer. Histidine 23 contacts heme.

The protein belongs to the PsbE/PsbF family. As to quaternary structure, heterodimer of an alpha subunit and a beta subunit. PSII is composed of 1 copy each of membrane proteins PsbA, PsbB, PsbC, PsbD, PsbE, PsbF, PsbH, PsbI, PsbJ, PsbK, PsbL, PsbM, PsbT, PsbX, PsbY, PsbZ, Psb30/Ycf12, at least 3 peripheral proteins of the oxygen-evolving complex and a large number of cofactors. It forms dimeric complexes. Heme b serves as cofactor.

The protein resides in the plastid membrane. This b-type cytochrome is tightly associated with the reaction center of photosystem II (PSII). PSII is a light-driven water:plastoquinone oxidoreductase that uses light energy to abstract electrons from H(2)O, generating O(2) and a proton gradient subsequently used for ATP formation. It consists of a core antenna complex that captures photons, and an electron transfer chain that converts photonic excitation into a charge separation. The polypeptide is Cytochrome b559 subunit alpha (Cuscuta reflexa (Southern Asian dodder)).